Consider the following 209-residue polypeptide: Lipid A acyltransferase PagP (209 aa).

Residues M1–A24 form the signal peptide. Catalysis depends on residues H81, D124, and S125.

It belongs to the lipid A palmitoyltransferase family. In terms of assembly, homodimer.

It localises to the cell outer membrane. The enzyme catalyses a lipid A + a 1,2-diacyl-sn-glycero-3-phosphocholine = a hepta-acyl lipid A + a 2-acyl-sn-glycero-3-phosphocholine. The catalysed reaction is a lipid IVA + a 1,2-diacyl-sn-glycero-3-phosphocholine = a lipid IVB + a 2-acyl-sn-glycero-3-phosphocholine. It carries out the reaction a lipid IIA + a 1,2-diacyl-sn-glycero-3-phosphocholine = a lipid IIB + a 2-acyl-sn-glycero-3-phosphocholine. In terms of biological role, transfers a fatty acid residue from the sn-1 position of a phospholipid to the N-linked hydroxyfatty acid chain on the proximal unit of lipid A or its precursors. The protein is Lipid A acyltransferase PagP of Pectobacterium parmentieri (strain WPP163) (Pectobacterium wasabiae (strain WPP163)).